A 152-amino-acid polypeptide reads, in one-letter code: Transcriptional regulator MraZ (152 aa).

SpoVT-AbrB domains lie at 5 to 52 (ATLV…PLPE) and 81 to 124 (ASEC…DETT).

Belongs to the MraZ family. As to quaternary structure, forms oligomers.

The protein resides in the cytoplasm. It is found in the nucleoid. Negatively regulates its own expression and that of the subsequent genes in the proximal part of the division and cell wall (dcw) gene cluster. Acts by binding directly to DNA. May also regulate the expression of genes outside the dcw cluster. The sequence is that of Transcriptional regulator MraZ from Citrobacter koseri (strain ATCC BAA-895 / CDC 4225-83 / SGSC4696).